The following is a 122-amino-acid chain: Probable transcription factor PqrA (122 aa).

Positions 7–107 (NDILKWLETQ…NTTPAKFREN (101 aa)) constitute an HTH araC/xylS-type domain. 2 consecutive DNA-binding regions (H-T-H motif) follow at residues 26–47 (DTIA…KDFK) and 74–97 (ILDI…KKHF).

Its function is as follows. Upon expression in E.coli strain KY2563 confers resistance to antibiotics ofloxacin, ciprofloxacin, tetracycline, chloramphenicol, and ceftazidime (increases minimal inhibitory concentration by 8-32 times); also decreases expression of OmpF. In Proteus vulgaris, this protein is Probable transcription factor PqrA.